The following is a 104-amino-acid chain: Ycf49-like protein (104 aa).

The next 3 helical transmembrane spans lie at 6–26 (IPTW…IALV), 41–61 (LAWG…WHFF), and 73–93 (LQAL…WWIY).

The protein belongs to the ycf49 family.

It localises to the cell membrane. The polypeptide is Ycf49-like protein (Synechocystis sp. (strain ATCC 27184 / PCC 6803 / Kazusa)).